Reading from the N-terminus, the 549-residue chain is Cobalt-dependent inorganic pyrophosphatase (549 aa).

2 CBS domains span residues Glu-74–Ser-130 and Met-252–Val-310. Residues Lys-100, Ser-116 to Asn-119, Thr-253, Val-258, and Tyr-278 to Asn-280 contribute to the AMP site.

The protein belongs to the PPase family. As to quaternary structure, homodimer. Co(2+) serves as cofactor. It depends on Mn(2+) as a cofactor. The cofactor is Mg(2+).

It carries out the reaction diphosphate + H2O = 2 phosphate + H(+). Its activity is regulated as follows. Inhibited by AMP and ADP with 25% and 35% of activity remaining, respectively, at saturating conditions. Activated 5-fold by diadenosine polyphosphates(Ap[n]A) with n&gt;2 (Ap3A, Ap4A, Ap5A, Ap6A) at saturating conditions. The sequence is that of Cobalt-dependent inorganic pyrophosphatase from Clostridium perfringens (strain 13 / Type A).